Reading from the N-terminus, the 530-residue chain is Bifunctional purine biosynthesis protein PurH (530 aa).

The 148-residue stretch at 1–148 (MNNARPIRRA…KNHKDVTIVV (148 aa)) folds into the MGS-like domain.

This sequence belongs to the PurH family.

The catalysed reaction is (6R)-10-formyltetrahydrofolate + 5-amino-1-(5-phospho-beta-D-ribosyl)imidazole-4-carboxamide = 5-formamido-1-(5-phospho-D-ribosyl)imidazole-4-carboxamide + (6S)-5,6,7,8-tetrahydrofolate. It catalyses the reaction IMP + H2O = 5-formamido-1-(5-phospho-D-ribosyl)imidazole-4-carboxamide. Its pathway is purine metabolism; IMP biosynthesis via de novo pathway; 5-formamido-1-(5-phospho-D-ribosyl)imidazole-4-carboxamide from 5-amino-1-(5-phospho-D-ribosyl)imidazole-4-carboxamide (10-formyl THF route): step 1/1. It participates in purine metabolism; IMP biosynthesis via de novo pathway; IMP from 5-formamido-1-(5-phospho-D-ribosyl)imidazole-4-carboxamide: step 1/1. The chain is Bifunctional purine biosynthesis protein PurH from Aliivibrio fischeri (strain ATCC 700601 / ES114) (Vibrio fischeri).